The chain runs to 90 residues: Probable Fe(2+)-trafficking protein (90 aa).

It belongs to the Fe(2+)-trafficking protein family.

Its function is as follows. Could be a mediator in iron transactions between iron acquisition and iron-requiring processes, such as synthesis and/or repair of Fe-S clusters in biosynthetic enzymes. The protein is Probable Fe(2+)-trafficking protein of Haemophilus influenzae (strain PittEE).